A 205-amino-acid polypeptide reads, in one-letter code: Small ribosomal subunit protein uS4 (205 aa).

A disordered region spans residues 18 to 46 (NIWGRPKSPVNRREYGPGQHGQRRKGKLS). The region spanning 94–157 (RRLDTVVYRS…KQLAIVLEAN (64 aa)) is the S4 RNA-binding domain.

Belongs to the universal ribosomal protein uS4 family. As to quaternary structure, part of the 30S ribosomal subunit. Contacts protein S5. The interaction surface between S4 and S5 is involved in control of translational fidelity.

Its function is as follows. One of the primary rRNA binding proteins, it binds directly to 16S rRNA where it nucleates assembly of the body of the 30S subunit. With S5 and S12 plays an important role in translational accuracy. In Rhodopseudomonas palustris (strain BisB5), this protein is Small ribosomal subunit protein uS4.